Here is a 138-residue protein sequence, read N- to C-terminus: MKRRRQRETALQVLFQAEVARISGERAFARTMELFGLNTEDFAYAQELVDGVLAKVDRLDRIISRVSHEWRLERMANVDRNIIRLALYEVFFRDDIPINVAVNEALELARTFGTEDSRRFVNGILGKVVEEPEEYRPE.

This sequence belongs to the NusB family.

Its function is as follows. Involved in transcription antitermination. Required for transcription of ribosomal RNA (rRNA) genes. Binds specifically to the boxA antiterminator sequence of the ribosomal RNA (rrn) operons. In Desulforudis audaxviator (strain MP104C), this protein is Transcription antitermination protein NusB.